A 199-amino-acid chain; its full sequence is GTP-binding protein Di-Ras2 (199 aa).

Residues 14–21 (GAGGVGKS), 33–39 (RESYIPT), 61–65 (DTTGS), and 121–124 (NKCD) each bind GTP. Serine 35 bears the Phosphoserine mark. Positions 36–44 (YIPTVEDTY) match the Effector region motif. Serine 126 is modified (phosphoserine). A GTP-binding site is contributed by 152–153 (AK). Position 196 is a cysteine methyl ester (cysteine 196). A lipid anchor (S-geranylgeranyl cysteine) is attached at cysteine 196. The propeptide at 197 to 199 (VIM) is removed in mature form.

The protein belongs to the small GTPase superfamily. Di-Ras family. In terms of processing, ubiquitinated by the ECS(ASB11) complex via 'Lys-11'-linked ubiquitin chains, leading to its degradation by the proteasome.

The protein localises to the cell membrane. The catalysed reaction is GTP + H2O = GDP + phosphate + H(+). Its function is as follows. Displays low GTPase activity and exists predominantly in the GTP-bound form. In Macaca fascicularis (Crab-eating macaque), this protein is GTP-binding protein Di-Ras2 (DIRAS2).